A 372-amino-acid chain; its full sequence is RNA polymerase sigma factor SigA (372 aa).

The sigma-70 factor domain-2 stretch occupies residues 139–209 (LAEANLRLVV…TRAIADQART (71 aa)). The short motif at 163 to 166 (DLIQ) is the Interaction with polymerase core subunit RpoC element. The sigma-70 factor domain-3 stretch occupies residues 218–294 (ETINKLIRVQ…DQDALAPSDA (77 aa)). A sigma-70 factor domain-4 region spans residues 307 to 360 (VLDTLTDREENVLRLRFGLDDGRTRTLEEVGKVFGVTRERIRQIEAKALRKLRH). Residues 333–352 (LEEVGKVFGVTRERIRQIEA) constitute a DNA-binding region (H-T-H motif).

The protein belongs to the sigma-70 factor family. RpoD/SigA subfamily. As to quaternary structure, interacts transiently with the RNA polymerase catalytic core.

The protein resides in the cytoplasm. In terms of biological role, sigma factors are initiation factors that promote the attachment of RNA polymerase to specific initiation sites and are then released. This sigma factor is the primary sigma factor during exponential growth. This Halalkalibacterium halodurans (strain ATCC BAA-125 / DSM 18197 / FERM 7344 / JCM 9153 / C-125) (Bacillus halodurans) protein is RNA polymerase sigma factor SigA.